The primary structure comprises 1080 residues: ATP-dependent helicase/deoxyribonuclease subunit B (1080 aa).

This sequence belongs to the helicase family. AddB/RexB type 2 subfamily. As to quaternary structure, heterodimer of AddA and RexB. Requires Mg(2+) as cofactor.

The heterodimer acts as both an ATP-dependent DNA helicase and an ATP-dependent, dual-direction single-stranded exonuclease. Recognizes the chi site generating a DNA molecule suitable for the initiation of homologous recombination. This subunit has 5' -&gt; 3' nuclease activity but not helicase activity. The chain is ATP-dependent helicase/deoxyribonuclease subunit B from Streptococcus mutans serotype c (strain ATCC 700610 / UA159).